We begin with the raw amino-acid sequence, 465 residues long: ATP synthase subunit beta (465 aa).

ATP is bound at residue 152–159; the sequence is GGAGVGKT.

This sequence belongs to the ATPase alpha/beta chains family. As to quaternary structure, F-type ATPases have 2 components, CF(1) - the catalytic core - and CF(0) - the membrane proton channel. CF(1) has five subunits: alpha(3), beta(3), gamma(1), delta(1), epsilon(1). CF(0) has three main subunits: a(1), b(2) and c(9-12). The alpha and beta chains form an alternating ring which encloses part of the gamma chain. CF(1) is attached to CF(0) by a central stalk formed by the gamma and epsilon chains, while a peripheral stalk is formed by the delta and b chains.

It localises to the cell inner membrane. The catalysed reaction is ATP + H2O + 4 H(+)(in) = ADP + phosphate + 5 H(+)(out). Functionally, produces ATP from ADP in the presence of a proton gradient across the membrane. The catalytic sites are hosted primarily by the beta subunits. The polypeptide is ATP synthase subunit beta (Campylobacter fetus subsp. fetus (strain 82-40)).